Consider the following 330-residue polypeptide: Probable aldo-keto reductase 6 (330 aa).

Tyr-64 serves as the catalytic Proton donor. His-132 contacts substrate. Residue 211-221 coordinates NADP(+); that stretch reads SPLGRGFLGLP.

Belongs to the aldo/keto reductase family.

This is Probable aldo-keto reductase 6 from Arabidopsis thaliana (Mouse-ear cress).